The following is a 469-amino-acid chain: Equisetin cluster transcription factor eqxR (469 aa).

The zn(2)-C6 fungal-type DNA-binding region spans 13-47 (CDRCRSHKLKCTVAPENSRSGSNRCTRCIRAQVTC). The tract at residues 58 to 84 (STNVKKADIKSGTNSQETTSMQASTIV) is disordered. Residues 68 to 82 (SGTNSQETTSMQAST) show a composition bias toward polar residues.

It is found in the nucleus. Its function is as follows. Transcription factor that regulates the expression of the gene cluster that mediates the biosynthesis of Equisetin. In Fusarium heterosporum, this protein is Equisetin cluster transcription factor eqxR.